The primary structure comprises 123 residues: Ribosome-binding factor A (123 aa).

This sequence belongs to the RbfA family. In terms of assembly, monomer. Binds 30S ribosomal subunits, but not 50S ribosomal subunits or 70S ribosomes.

It localises to the cytoplasm. Its function is as follows. One of several proteins that assist in the late maturation steps of the functional core of the 30S ribosomal subunit. Associates with free 30S ribosomal subunits (but not with 30S subunits that are part of 70S ribosomes or polysomes). Required for efficient processing of 16S rRNA. May interact with the 5'-terminal helix region of 16S rRNA. The chain is Ribosome-binding factor A from Rickettsia bellii (strain OSU 85-389).